The chain runs to 316 residues: Thymidylate synthase (316 aa).

DUMP contacts are provided by residues Arg-23 and 178–179 (RR). The Nucleophile role is filled by Cys-198. Residues 218–221 (RSAD), Asn-229, and 259–261 (HLY) each bind dUMP. Asp-221 lines the (6R)-5,10-methylene-5,6,7,8-tetrahydrofolate pocket. Residue Ala-315 coordinates (6R)-5,10-methylene-5,6,7,8-tetrahydrofolate.

This sequence belongs to the thymidylate synthase family. Bacterial-type ThyA subfamily. As to quaternary structure, homodimer.

The protein resides in the cytoplasm. It catalyses the reaction dUMP + (6R)-5,10-methylene-5,6,7,8-tetrahydrofolate = 7,8-dihydrofolate + dTMP. Its pathway is pyrimidine metabolism; dTTP biosynthesis. Functionally, catalyzes the reductive methylation of 2'-deoxyuridine-5'-monophosphate (dUMP) to 2'-deoxythymidine-5'-monophosphate (dTMP) while utilizing 5,10-methylenetetrahydrofolate (mTHF) as the methyl donor and reductant in the reaction, yielding dihydrofolate (DHF) as a by-product. This enzymatic reaction provides an intracellular de novo source of dTMP, an essential precursor for DNA biosynthesis. The chain is Thymidylate synthase from Lacticaseibacillus paracasei (strain ATCC 334 / BCRC 17002 / CCUG 31169 / CIP 107868 / KCTC 3260 / NRRL B-441) (Lactobacillus paracasei).